The sequence spans 556 residues: Membrane protein insertase YidC (556 aa).

5 helical membrane passes run 6-26, 332-352, 358-378, 428-448, and 501-521; these read IVLY…WQID, LDLT…FSLM, VVGN…LAFY, LGGC…YWVL, and VMMF…SGLV.

This sequence belongs to the OXA1/ALB3/YidC family. Type 1 subfamily. As to quaternary structure, interacts with the Sec translocase complex via SecD. Specifically interacts with transmembrane segments of nascent integral membrane proteins during membrane integration.

The protein resides in the cell inner membrane. Functionally, required for the insertion and/or proper folding and/or complex formation of integral membrane proteins into the membrane. Involved in integration of membrane proteins that insert both dependently and independently of the Sec translocase complex, as well as at least some lipoproteins. Aids folding of multispanning membrane proteins. The chain is Membrane protein insertase YidC from Legionella pneumophila (strain Lens).